Consider the following 100-residue polypeptide: Replication restart protein PriB (100 aa).

The 99-residue stretch at 1–99 (MGFNNLVSLA…LRIQNIKEYK (99 aa)) folds into the SSB domain.

This sequence belongs to the PriB family. Homodimer. Interacts with PriA and DnaT. Component of the replication restart primosome. Primosome assembly occurs via a 'hand-off' mechanism. PriA binds to replication forks, subsequently PriB then DnaT bind; DnaT then displaces ssDNA to generate the helicase loading substrate.

Its function is as follows. Involved in the restart of stalled replication forks, which reloads the replicative helicase on sites other than the origin of replication; the PriA-PriB pathway is the major replication restart pathway. During primosome assembly it facilitates complex formation between PriA and DnaT on DNA; stabilizes PriA on DNA. Stimulates the DNA unwinding activity of PriA helicase. This chain is Replication restart protein PriB, found in Neisseria meningitidis serogroup C (strain 053442).